A 148-amino-acid polypeptide reads, in one-letter code: Protein ADM2 (148 aa).

The first 24 residues, 1–24, serve as a signal peptide directing secretion; sequence MARIPTAALGCISLLCLQLPGSLS. Positions 25–98 are excised as a propeptide; the sequence is RSLGGDPRPV…HSGPRRHSGP (74 aa). 2 disordered regions span residues 26-57 and 70-101; these read SLGG…APRP and RGAG…PRRT. Cys-110 and Cys-115 form a disulfide bridge. Position 147 is a tyrosine amide (Tyr-147).

It belongs to the adrenomedullin family. As to expression, expressed in the esophagus, stomach, jejunum, ileum, ileocecum, ascending colon, transverse colon, descending colon and rectum. Expressed in myocardial cells of the heart, renal tubular cells, hypothalamus, and pituitary.

Its subcellular location is the secreted. Intermedin/ADM2 is a peptide hormone that plays a role as physiological regulator of gastrointestinal and cardiovascular bioactivities mediated by the CALCRL-RAMPs receptor complexes. Activates the cAMP-dependent pathway through interaction with CALCRL-RAMP3 receptor complex. This chain is Protein ADM2, found in Homo sapiens (Human).